A 518-amino-acid polypeptide reads, in one-letter code: Metalloprotease TIKI2 (518 aa).

Residues 1-22 (MNCQSGLRWLVTLCAFFQVGSA) form the signal peptide. Topologically, residues 23–499 (RDTHESTRQC…SALDSAAPNP (477 aa)) are extracellular. N-linked (GlcNAc...) asparagine glycosylation is found at Asn-224, Asn-233, Asn-282, Asn-325, and Asn-340. A helical transmembrane segment spans residues 500–517 (TYALTCFLACLISQLLFA). Position 518 (Ser-518) is a topological domain, cytoplasmic.

Belongs to the TIKI family. Mn(2+) serves as cofactor. The cofactor is Co(2+).

Its subcellular location is the cell membrane. Its function is as follows. Metalloprotease that acts as a negative regulator of the Wnt signaling pathway by mediating the cleavage of the N-terminal residues of a subset of Wnt proteins. Following cleavage, Wnt proteins become oxidized and form large disulfide-bond oligomers, leading to their inactivation. The chain is Metalloprotease TIKI2 (trabd2b) from Danio rerio (Zebrafish).